Reading from the N-terminus, the 1400-residue chain is Macrophage-stimulating protein receptor (1400 aa).

The N-terminal stretch at 1–24 (MELLPPLPQSFLLLLLLPAKPAAG) is a signal peptide. Residues 25–957 (EDWQCPRTPY…PGPDGVPQST (933 aa)) are Extracellular-facing. The region spanning 31-522 (RTPYAASRDF…SGDQVFQVPI (492 aa)) is the Sema domain. An N-linked (GlcNAc...) asparagine glycan is attached at Asn66. 7 cysteine pairs are disulfide-bonded: Cys101/Cys104, Cys107/Cys162, Cys135/Cys143, Cys174/Cys177, Cys300/Cys367, Cys385/Cys407, and Cys386/Cys422. Residues Asn419, Asn458, and Asn488 are each glycosylated (N-linked (GlcNAc...) asparagine). Intrachain disulfides connect Cys527-Cys545, Cys533-Cys567, Cys536-Cys552, and Cys548-Cys558. IPT/TIG domains follow at residues 569–671 (PKLT…FRVD), 684–767 (PVLI…FQYR), and 770–860 (PVVL…FRFL). 4 N-linked (GlcNAc...) asparagine glycosylation sites follow: Asn654, Asn720, Asn841, and Asn897. The chain crosses the membrane as a helical span at residues 958 to 978 (LLGILLPLLLLVAALATALVF). At 979–1400 (SYWWRRKQLV…RPLSEPPRPT (422 aa)) the chain is on the cytoplasmic side. In terms of domain architecture, Protein kinase spans 1082-1345 (THSDRVIGKG…VLVGEVEQIV (264 aa)). ATP contacts are provided by residues 1088 to 1096 (IGKGHFGVV), Lys1114, and 1161 to 1164 (LPYM). Residue Asp1208 is the Proton acceptor of the active site. ATP is bound at residue Arg1212. A phosphotyrosine; by autocatalysis mark is found at Tyr1238, Tyr1239, Tyr1353, and Tyr1360. Residues 1367-1400 (TSHEMNVRPEQPQFSPMPGNVRRPRPLSEPPRPT) form a disordered region.

Belongs to the protein kinase superfamily. Tyr protein kinase family. Heterodimer of an alpha chain and a beta chain which are disulfide linked. Binds PLXNB1. Associates with and is negatively regulated by HYAL2. Interacts when phosphorylated with downstream effectors including PIK3R1, PCLG1, GRB2 and GAB1. Interacts with integrin beta1/ITGB1 in a ligand-independent fashion. Proteolytic processing yields the two subunits. In terms of processing, autophosphorylated in response to ligand binding on Tyr-1238 and Tyr-1239 in the kinase domain leading to further phosphorylation of Tyr-1353 and Tyr-1360 in the C-terminal multifunctional docking site. Post-translationally, ubiquitinated. Ubiquitination by CBL regulates the receptor stability and activity through proteasomal degradation. O-mannosylation of IPT/TIG domains on Thr or Ser residues by TMEM260 is required for protein maturation. O-mannosylated residues are composed of single mannose glycans that are not elongated or modified. Expressed in colon, skin, lung and bone marrow.

It localises to the membrane. The catalysed reaction is L-tyrosyl-[protein] + ATP = O-phospho-L-tyrosyl-[protein] + ADP + H(+). With respect to regulation, in its inactive state, the C-terminal tail interacts with the catalytic domain and inhibits the kinase activity. Upon ligand binding, the C-terminal tail is displaced and becomes phosphorylated, thus increasing the kinase activity. Receptor tyrosine kinase that transduces signals from the extracellular matrix into the cytoplasm by binding to MST1 ligand. Regulates many physiological processes including cell survival, migration and differentiation. Ligand binding at the cell surface induces autophosphorylation of RON on its intracellular domain that provides docking sites for downstream signaling molecules. Following activation by ligand, interacts with the PI3-kinase subunit PIK3R1, PLCG1 or the adapter GAB1. Recruitment of these downstream effectors by RON leads to the activation of several signaling cascades including the RAS-ERK, PI3 kinase-AKT, or PLCgamma-PKC. RON signaling activates the wound healing response by promoting epithelial cell migration, proliferation as well as survival at the wound site. Also plays a role in the innate immune response by regulating the migration and phagocytic activity of macrophages. Alternatively, RON can also promote signals such as cell migration and proliferation in response to growth factors other than MST1 ligand. This chain is Macrophage-stimulating protein receptor (MST1R), found in Homo sapiens (Human).